The sequence spans 102 residues: Co-chaperonin GroES (102 aa).

This sequence belongs to the GroES chaperonin family. As to quaternary structure, heptamer of 7 subunits arranged in a ring. Interacts with the chaperonin GroEL.

It localises to the cytoplasm. In terms of biological role, together with the chaperonin GroEL, plays an essential role in assisting protein folding. The GroEL-GroES system forms a nano-cage that allows encapsulation of the non-native substrate proteins and provides a physical environment optimized to promote and accelerate protein folding. GroES binds to the apical surface of the GroEL ring, thereby capping the opening of the GroEL channel. This is Co-chaperonin GroES from Anabaena sp. (strain L31).